We begin with the raw amino-acid sequence, 142 residues long: Hemoglobin subunit alpha (142 aa).

The region spanning 2 to 142 (VLSPADKSNV…VSTVLTSKYR (141 aa)) is the Globin domain. S4 is modified (phosphoserine). 2 positions are modified to N6-succinyllysine: K8 and K12. An N6-acetyllysine; alternate modification is found at K17. K17 bears the N6-succinyllysine; alternate mark. Phosphotyrosine is present on Y25. S36 bears the Phosphoserine mark. K41 is modified (N6-succinyllysine). S50 carries the phosphoserine modification. O2 is bound at residue H59. A heme b-binding site is contributed by H88. S103 carries the phosphoserine modification. T109 bears the Phosphothreonine mark. Residues S125 and S132 each carry the phosphoserine modification. Phosphothreonine occurs at positions 135 and 138. S139 is subject to Phosphoserine.

It belongs to the globin family. Heterotetramer of two alpha chains and two beta chains. Red blood cells.

Involved in oxygen transport from the lung to the various peripheral tissues. Its function is as follows. Hemopressin acts as an antagonist peptide of the cannabinoid receptor CNR1. Hemopressin-binding efficiently blocks cannabinoid receptor CNR1 and subsequent signaling. In Macaca fuscata fuscata (Japanese macaque), this protein is Hemoglobin subunit alpha (HBA).